Here is a 449-residue protein sequence, read N- to C-terminus: Phosphoglucosamine mutase (449 aa).

The active-site Phosphoserine intermediate is serine 100. 4 residues coordinate Mg(2+): serine 100, aspartate 241, aspartate 243, and aspartate 245. Serine 100 is modified (phosphoserine).

The protein belongs to the phosphohexose mutase family. Requires Mg(2+) as cofactor. Activated by phosphorylation.

The catalysed reaction is alpha-D-glucosamine 1-phosphate = D-glucosamine 6-phosphate. In terms of biological role, catalyzes the conversion of glucosamine-6-phosphate to glucosamine-1-phosphate. The protein is Phosphoglucosamine mutase of Caldicellulosiruptor bescii (strain ATCC BAA-1888 / DSM 6725 / KCTC 15123 / Z-1320) (Anaerocellum thermophilum).